The sequence spans 364 residues: DNA polymerase IV (364 aa).

Residues I14–G198 form the UmuC domain. D18 and D116 together coordinate Mg(2+). Residue E117 is part of the active site.

The protein belongs to the DNA polymerase type-Y family. As to quaternary structure, monomer. The cofactor is Mg(2+).

Its subcellular location is the cytoplasm. It catalyses the reaction DNA(n) + a 2'-deoxyribonucleoside 5'-triphosphate = DNA(n+1) + diphosphate. In terms of biological role, poorly processive, error-prone DNA polymerase involved in untargeted mutagenesis. Copies undamaged DNA at stalled replication forks, which arise in vivo from mismatched or misaligned primer ends. These misaligned primers can be extended by PolIV. Exhibits no 3'-5' exonuclease (proofreading) activity. May be involved in translesional synthesis, in conjunction with the beta clamp from PolIII. This Streptococcus pyogenes serotype M1 protein is DNA polymerase IV.